The chain runs to 435 residues: MAASDTERDGLAPEKTSPDTDKKKEQSDVSVSPRASKHHYSRSRSRSRERKRKSDNEGRKHRSRSRSKEARRHESKDKSSKKHKSEEHNDKEHSSDKGRERLNSSENGEDRHKRKERKSSRGRSHSRSRSRERRHRSRSRERKKSRSRSRDRKKSRSRSRERKKSRSRSRERKRRIRSRSRSRSRHRHRSRSRSRTRSRSRDRKKRIEKPRRFSRSLSRTPSPPPFRGRNTAMDAQEALARRLERAKKLQEQREKEMVEKQKQQEIAAAAAATGGSVLNVAALLASGTQVTPQIAMAAQMAALQAKALAETGIAVPSYYNPAAVNPMKFAEQEKKRKMLWQGKKEGDKSQSAEIWEKLNFGNKDQNVKFRKLMGIKSEDEAGCSSVDEESYKTLKQQEEVFRNLDAQYEMARSQTHTQRGMGLGFTSSMRGMDTV.

A compositionally biased stretch (basic and acidic residues) spans 1 to 27 (MAASDTERDGLAPEKTSPDTDKKKEQS). Residues 1 to 230 (MAASDTERDG…PSPPPFRGRN (230 aa)) are disordered. The residue at position 2 (A2) is an N-acetylalanine. S4 is modified (phosphoserine). Residues T6 and T16 each carry the phosphothreonine modification. S17, S30, and S32 each carry phosphoserine. A compositionally biased stretch (basic residues) spans 35–51 (ASKHHYSRSRSRSRERK). Positions 66 to 111 (RSKEARRHESKDKSSKKHKSEEHNDKEHSSDKGRERLNSSENGEDR) are enriched in basic and acidic residues. At S104 the chain carries Phosphoserine. Residues 112 to 214 (HKRKERKSSR…KRIEKPRRFS (103 aa)) are compositionally biased toward basic residues. Residues 230–272 (NTAMDAQEALARRLERAKKLQEQREKEMVEKQKQQEIAAAAAA) are a coiled coil. A Glycyl lysine isopeptide (Lys-Gly) (interchain with G-Cter in SUMO1); alternate cross-link involves residue K376. A Glycyl lysine isopeptide (Lys-Gly) (interchain with G-Cter in SUMO2); alternate cross-link involves residue K376. At S377 the chain carries Phosphoserine.

This sequence belongs to the RSRC2 family.

This Bos taurus (Bovine) protein is Arginine/serine-rich coiled-coil protein 2 (RSRC2).